The chain runs to 250 residues: Eukaryotic translation initiation factor 3 subunit K (250 aa).

The 182-residue stretch at 54 to 235 folds into the PCI domain; it reads YDLFGNLAIL…DVKAGVVKEN (182 aa).

Belongs to the eIF-3 subunit K family. In terms of assembly, component of the eukaryotic translation initiation factor 3 (eIF-3) complex.

The protein resides in the cytoplasm. Functionally, component of the eukaryotic translation initiation factor 3 (eIF-3) complex, which is involved in protein synthesis of a specialized repertoire of mRNAs and, together with other initiation factors, stimulates binding of mRNA and methionyl-tRNAi to the 40S ribosome. The eIF-3 complex specifically targets and initiates translation of a subset of mRNAs involved in cell proliferation. This Cryptococcus neoformans var. neoformans serotype D (strain B-3501A) (Filobasidiella neoformans) protein is Eukaryotic translation initiation factor 3 subunit K.